A 1710-amino-acid chain; its full sequence is Phosphatidylinositol 4-phosphate 5-kinase (1710 aa).

The 31-residue stretch at 68–98 (YKSIFKAFDLNNDNYLDFYEFCVAINIMLKG) folds into the EF-hand domain. Ca(2+) is bound by residues Asp76, Asn78, Asp80, Tyr82, and Glu87. Disordered stretches follow at residues 139–255 (NNMN…DPIN), 427–479 (KQKK…IKSV), and 895–993 (GEGH…HNNN). A compositionally biased stretch (low complexity) spans 140–235 (NMNGDNINGD…HNNNSHNNNN (96 aa)). The span at 236 to 248 (KAENSLGQPLNEK) shows a compositional bias: polar residues. Positions 427-444 (KQKKKKKKKKKKKKKKEK) are enriched in basic residues. The span at 456-468 (SSSMENKSQNKSQ) shows a compositional bias: low complexity. A compositionally biased stretch (acidic residues) spans 902-973 (EEEEKNDDEE…DDNDDNDDND (72 aa)). Residues 974 to 987 (EKSNIKIENKKDVP) show a composition bias toward basic and acidic residues. Positions 1334-1709 (QKKTFHRILA…RFVTFIENHM (376 aa)) constitute a PIPK domain.

It catalyses the reaction a 1,2-diacyl-sn-glycero-3-phospho-(1D-myo-inositol 4-phosphate) + ATP = a 1,2-diacyl-sn-glycero-3-phospho-(1D-myo-inositol-4,5-bisphosphate) + ADP + H(+). Catalytic activity is increase by myristoylated ARF1. Phosphatidic acid has no effect on catalytic activity. In terms of biological role, catalyzes the phosphorylation of phosphatidylinositol 4-phosphate (PtdIns(4)P/PI4P) to form phosphatidylinositol 4,5-bisphosphate (PtdIns(4,5)P2/PIP2), a lipid second messenger that regulates several cellular processes. This chain is Phosphatidylinositol 4-phosphate 5-kinase, found in Plasmodium falciparum (isolate 3D7).